Here is a 41-residue protein sequence, read N- to C-terminus: Large ribosomal subunit protein bL36 (41 aa).

Belongs to the bacterial ribosomal protein bL36 family.

The chain is Large ribosomal subunit protein bL36 from Bartonella quintana (strain Toulouse) (Rochalimaea quintana).